Here is a 742-residue protein sequence, read N- to C-terminus: Two pore calcium channel protein 1 (742 aa).

Residues 1 to 44 (MSEAQAPLITEEAAERGLASSGSRRLSDGGGGQGSRKYRRRSDA) form a disordered region. Residues 1–82 (MSEAQAPLIT…NDTRFGRAMS (82 aa)) are Cytoplasmic-facing. A helical membrane pass occupies residues 83 to 103 (FYFVYLRLDWLWSLNIFALIL). At 104–140 (LNFLEKPLWCRKDALHACDQRDMYFLGQLPYFSKTES) the chain is on the extracellular side. Residues 141–161 (LIYEGLTLVILVMEILCPLSY) form a helical membrane-spanning segment. Residues 162–176 (EGLNIFWRSTTNKLK) lie on the Cytoplasmic side of the membrane. The helical transmembrane segment at 177-197 (ILLLFILACDILVFAFSSQPF) threads the bilayer. At 198–204 (RLAPYIR) the chain is on the extracellular side. The helical; Voltage-sensor transmembrane segment at 205 to 226 (VVFLIMTIRELRMCAITLAGLI) threads the bilayer. Residues 227 to 247 (GTYLNVLALSLLFLLFASWLA) form a helical membrane-spanning segment. Residues 248-258 (YVTFEDTPQGK) lie on the Extracellular side of the membrane. The segment at residues 259-273 (TIFSSYGVTLYQMFV) is an intramembrane region (pore-forming). The Extracellular portion of the chain corresponds to 274 to 296 (LFTTSNNPDVWVPAYKISRWYSL). Residues 297 to 317 (FFIVYVLLGVYFLTNLILAVI) form a helical membrane-spanning segment. Over 318 to 446 (YDSFKEQFAK…SFVRSRTFEY (129 aa)) the chain is Cytoplasmic. EF-hand domains are found at residues 335–370 (IRKN…LNKY) and 376–411 (TSRE…IAIK). A helical transmembrane segment spans residues 447–467 (IIVFVLLINLVAVIIETTLDI). The Extracellular segment spans residues 468-480 (ENSSSQETWQEVE). N469 is a glycosylation site (N-linked (GlcNAc...) asparagine). The helical transmembrane segment at 481 to 501 (FFLGWIYVAEMALKIFSLGFG) threads the bilayer. Topologically, residues 502–510 (AYWMEGQNK) are cytoplasmic. A helical transmembrane segment spans residues 511–531 (FDFVLTWTIFIGETLTFAFPS). At 532–540 (KLPFLSNGE) the chain is on the extracellular side. The helical; Voltage-sensor transmembrane segment at 541–558 (WIRYLLLGRVLRLTRILL) threads the bilayer. Residues 559 to 582 (QVQRFRVFVATFFTLMSSLMPYLG) are Cytoplasmic-facing. The chain crosses the membrane as a helical span at residues 583–603 (IVFCILCMYCSLGLQIFGGIV). The Extracellular portion of the chain corresponds to 604–627 (YAGNPTLEETDLFSNDYLLFNFND). The segment at residues 628–642 (YPSGMVTLFNLLVMG) is an intramembrane region (pore-forming). Residues 643 to 663 (NWQVWMESYWQLTGSSWSLIY) are Extracellular-facing. A helical transmembrane segment spans residues 664 to 684 (FVSFYLISILLLLNLIVAFVL). At 685–742 (EAFFAEMELEKGEEVDIQSPTSGGIKKRRSMRVRSKGTMVDILLHHMLSNELDGSQNS) the chain is on the cytoplasmic side.

The protein belongs to the calcium channel alpha-1 subunit (TC 1.A.1.11) family. Two pore calcium channel subfamily. In terms of assembly, homodimer.

The protein resides in the membrane. Inhibited by Al(3+). Functions as a voltage-gated inward-rectifying Ca(2+) channel (VDCC) across the plasma membrane that mediates sucrose-induced Ca(2+) influx in autotrophically grown leaf cells. Acts as the major ROS-responsive Ca(2+) channel and is the possible target of Al-dependent inhibition. Plays a regulatory role in defense responses. In Hordeum vulgare (Barley), this protein is Two pore calcium channel protein 1 (TPC1).